Here is a 261-residue protein sequence, read N- to C-terminus: Undecaprenyl-diphosphatase (261 aa).

8 helical membrane passes run 16 to 36 (TEFL…LFGF), 40 to 60 (GLVF…VYFW), 82 to 102 (FWFL…LEDI), 107 to 127 (LRAP…LYLA), 140 to 160 (IRFG…IPGV), 183 to 203 (FSFL…MLKM), 211 to 231 (SFVL…WFLI), and 239 to 259 (FNIF…IALL).

This sequence belongs to the UppP family.

It is found in the cell membrane. The catalysed reaction is di-trans,octa-cis-undecaprenyl diphosphate + H2O = di-trans,octa-cis-undecaprenyl phosphate + phosphate + H(+). Its function is as follows. Catalyzes the dephosphorylation of undecaprenyl diphosphate (UPP). Confers resistance to bacitracin. The chain is Undecaprenyl-diphosphatase from Desulforudis audaxviator (strain MP104C).